Here is an 82-residue protein sequence, read N- to C-terminus: Small ribosomal subunit protein bS18 (82 aa).

Residues 1–20 (MSEINQTVTRRPFHRRRKTC) are disordered.

The protein belongs to the bacterial ribosomal protein bS18 family. Part of the 30S ribosomal subunit. Forms a tight heterodimer with protein bS6.

In terms of biological role, binds as a heterodimer with protein bS6 to the central domain of the 16S rRNA, where it helps stabilize the platform of the 30S subunit. In Bartonella quintana (strain Toulouse) (Rochalimaea quintana), this protein is Small ribosomal subunit protein bS18.